We begin with the raw amino-acid sequence, 388 residues long: Arginine biosynthesis bifunctional protein ArgJ 2 (388 aa).

Substrate is bound by residues T145, K167, T178, E257, and N381. The active-site Nucleophile is the T178.

It belongs to the ArgJ family. As to quaternary structure, heterotetramer of two alpha and two beta chains.

The protein resides in the cytoplasm. It carries out the reaction N(2)-acetyl-L-ornithine + L-glutamate = N-acetyl-L-glutamate + L-ornithine. It catalyses the reaction L-glutamate + acetyl-CoA = N-acetyl-L-glutamate + CoA + H(+). It participates in amino-acid biosynthesis; L-arginine biosynthesis; L-ornithine and N-acetyl-L-glutamate from L-glutamate and N(2)-acetyl-L-ornithine (cyclic): step 1/1. Its pathway is amino-acid biosynthesis; L-arginine biosynthesis; N(2)-acetyl-L-ornithine from L-glutamate: step 1/4. Its function is as follows. Catalyzes two activities which are involved in the cyclic version of arginine biosynthesis: the synthesis of N-acetylglutamate from glutamate and acetyl-CoA as the acetyl donor, and of ornithine by transacetylation between N(2)-acetylornithine and glutamate. In Clostridium acetobutylicum (strain ATCC 824 / DSM 792 / JCM 1419 / IAM 19013 / LMG 5710 / NBRC 13948 / NRRL B-527 / VKM B-1787 / 2291 / W), this protein is Arginine biosynthesis bifunctional protein ArgJ 2.